A 140-amino-acid chain; its full sequence is 3-hydroxyacyl-[acyl-carrier-protein] dehydratase FabZ (140 aa).

Residue His48 is part of the active site.

This sequence belongs to the thioester dehydratase family. FabZ subfamily.

It localises to the cytoplasm. The catalysed reaction is a (3R)-hydroxyacyl-[ACP] = a (2E)-enoyl-[ACP] + H2O. Its function is as follows. Involved in unsaturated fatty acids biosynthesis. Catalyzes the dehydration of short chain beta-hydroxyacyl-ACPs and long chain saturated and unsaturated beta-hydroxyacyl-ACPs. This Ligilactobacillus salivarius (strain UCC118) (Lactobacillus salivarius) protein is 3-hydroxyacyl-[acyl-carrier-protein] dehydratase FabZ.